The sequence spans 222 residues: Ribosomal RNA small subunit methyltransferase G (222 aa).

Residues Gly-73, Leu-78, 124–125, and Arg-137 contribute to the S-adenosyl-L-methionine site; that span reads AE.

It belongs to the methyltransferase superfamily. RNA methyltransferase RsmG family.

Its subcellular location is the cytoplasm. In terms of biological role, specifically methylates the N7 position of guanine in position 518 of 16S rRNA. This Acidothermus cellulolyticus (strain ATCC 43068 / DSM 8971 / 11B) protein is Ribosomal RNA small subunit methyltransferase G.